The following is a 227-amino-acid chain: Guanylate kinase (227 aa).

One can recognise a Guanylate kinase-like domain in the interval 21–199 (GNLFMVVAPS…ALAELECIVA (179 aa)). 28–35 (APSGAGKS) lines the ATP pocket.

The protein belongs to the guanylate kinase family.

The protein localises to the cytoplasm. It carries out the reaction GMP + ATP = GDP + ADP. Its function is as follows. Essential for recycling GMP and indirectly, cGMP. This Burkholderia lata (strain ATCC 17760 / DSM 23089 / LMG 22485 / NCIMB 9086 / R18194 / 383) protein is Guanylate kinase.